Consider the following 932-residue polypeptide: Isoleucine--tRNA ligase (932 aa).

The 'HIGH' region motif lies at 58 to 68 (PYANGDIHIGH). Residue Glu570 participates in L-isoleucyl-5'-AMP binding. The short motif at 611 to 615 (KMSKS) is the 'KMSKS' region element. ATP is bound at residue Lys614. Residues Cys895, Cys898, Cys915, and Cys918 each coordinate Zn(2+).

The protein belongs to the class-I aminoacyl-tRNA synthetase family. IleS type 1 subfamily. Monomer. Requires Zn(2+) as cofactor.

It localises to the cytoplasm. It catalyses the reaction tRNA(Ile) + L-isoleucine + ATP = L-isoleucyl-tRNA(Ile) + AMP + diphosphate. Its function is as follows. Catalyzes the attachment of isoleucine to tRNA(Ile). As IleRS can inadvertently accommodate and process structurally similar amino acids such as valine, to avoid such errors it has two additional distinct tRNA(Ile)-dependent editing activities. One activity is designated as 'pretransfer' editing and involves the hydrolysis of activated Val-AMP. The other activity is designated 'posttransfer' editing and involves deacylation of mischarged Val-tRNA(Ile). The polypeptide is Isoleucine--tRNA ligase (Dechloromonas aromatica (strain RCB)).